Consider the following 692-residue polypeptide: Elongation factor G (692 aa).

The region spanning 8–282 (ENTRNIGIMA…AVIDYLPSPL (275 aa)) is the tr-type G domain. GTP is bound by residues 17–24 (AHIDAGKT), 81–85 (DTPGH), and 135–138 (NKMD).

It belongs to the TRAFAC class translation factor GTPase superfamily. Classic translation factor GTPase family. EF-G/EF-2 subfamily.

The protein localises to the cytoplasm. Functionally, catalyzes the GTP-dependent ribosomal translocation step during translation elongation. During this step, the ribosome changes from the pre-translocational (PRE) to the post-translocational (POST) state as the newly formed A-site-bound peptidyl-tRNA and P-site-bound deacylated tRNA move to the P and E sites, respectively. Catalyzes the coordinated movement of the two tRNA molecules, the mRNA and conformational changes in the ribosome. The protein is Elongation factor G of Bacillus cereus (strain Q1).